Here is a 72-residue protein sequence, read N- to C-terminus: DNA-directed RNA polymerase subunit omega (72 aa).

It belongs to the RNA polymerase subunit omega family. As to quaternary structure, the RNAP catalytic core consists of 2 alpha, 1 beta, 1 beta' and 1 omega subunit. When a sigma factor is associated with the core the holoenzyme is formed, which can initiate transcription.

It catalyses the reaction RNA(n) + a ribonucleoside 5'-triphosphate = RNA(n+1) + diphosphate. In terms of biological role, promotes RNA polymerase assembly. Latches the N- and C-terminal regions of the beta' subunit thereby facilitating its interaction with the beta and alpha subunits. This is DNA-directed RNA polymerase subunit omega from Limosilactobacillus reuteri (strain DSM 20016) (Lactobacillus reuteri).